The primary structure comprises 131 residues: Protein Turandot M (131 aa).

Residues 1 to 23 (MNPTVYLSCLVVFSLFYLGKAQA) form the signal peptide.

Belongs to the Turandot family.

Its subcellular location is the secreted. A humoral factor that may play a role in stress tolerance. Requires Mekk1 expression in the fat body to regulate response to septic injury and consequent immune response. This chain is Protein Turandot M, found in Drosophila yakuba (Fruit fly).